The following is a 97-amino-acid chain: Sorbitol dehydrogenase (97 aa).

Cys44 lines the Zn(2+) pocket. Residue Tyr50 participates in substrate binding. Residues His69 and Glu70 each contribute to the Zn(2+) site.

The protein belongs to the zinc-containing alcohol dehydrogenase family. Homotetramer. Zn(2+) is required as a cofactor.

Its subcellular location is the mitochondrion membrane. It localises to the cell projection. The protein localises to the cilium. It is found in the flagellum. The catalysed reaction is xylitol + NAD(+) = D-xylulose + NADH + H(+). It catalyses the reaction L-iditol + NAD(+) = keto-L-sorbose + NADH + H(+). It carries out the reaction keto-D-fructose + NADH + H(+) = D-sorbitol + NAD(+). In terms of biological role, polyol dehydrogenase that catalyzes the reversible NAD(+)-dependent oxidation of various sugar alcohols. Is active with xylitol, L-iditol and D-sorbitol (D-glucitol) as substrates, leading to the C2-oxidized products D-xylulose, L-sorbose and D-fructose, respectively. Is a key enzyme in the polyol pathway that interconverts glucose and fructose via sorbitol, which constitutes an important alternate route for glucose metabolism. May play a role in sperm motility by using sorbitol as an alternative energy source for sperm motility. In Sus scrofa (Pig), this protein is Sorbitol dehydrogenase (SORD).